The primary structure comprises 463 residues: uncharacterized protein (463 aa).

The TRAM domain maps to 12–70 (LWQQGSVVELTITGLNHQGEGIGRFNERVVFVPDTAPGDRLEVRLVKVKRNYALAQLLK). Cys-83, Cys-89, Cys-92, and Cys-171 together coordinate [4Fe-4S] cluster. S-adenosyl-L-methionine contacts are provided by Gln-295, Tyr-324, Glu-345, and Asp-390. Cys-417 (nucleophile) is an active-site residue.

Belongs to the class I-like SAM-binding methyltransferase superfamily. RNA M5U methyltransferase family.

This is an uncharacterized protein from Synechocystis sp. (strain ATCC 27184 / PCC 6803 / Kazusa).